We begin with the raw amino-acid sequence, 315 residues long: Calcium homeostasis modulator protein 6 (315 aa).

Residues 1–21 (MEKFRAVLDLHVKHHSALGYG) are Cytoplasmic-facing. Residues 22–37 (LVTLLTAGGERIFSAV) form a helical membrane-spanning segment. Residues 38 to 46 (AFQCPCSAA) lie on the Extracellular side of the membrane. 3 disulfides stabilise this stretch: cysteine 41–cysteine 126, cysteine 43–cysteine 155, and cysteine 139–cysteine 146. Residues 47-68 (WNLPYGLVFLLVPALALFLLGY) form a helical membrane-spanning segment. Over 69–102 (VLSARTWRLLTGCCSSARASCGSALRGSLVCTQI) the chain is Cytoplasmic. A helical membrane pass occupies residues 103–127 (SAAAALAPLTWVAVALLGGAFYECA). Topologically, residues 128–169 (ATGSAAFAQRLCLGRNRSCAAELPLVPCNQAKASDVQDLLKD) are extracellular. A helical membrane pass occupies residues 170-192 (LKAQSQVLGWILIAVVIIILLIF). At 193-315 (TSVTRCLSPV…SSGINSTPEL (123 aa)) the chain is on the cytoplasmic side.

It belongs to the CALHM family. In terms of assembly, oligomerizes to form decameric and undecameric channels. N-glycosylated. In terms of tissue distribution, placenta.

It localises to the cell membrane. The catalysed reaction is ATP(in) = ATP(out). Its function is as follows. Pore-forming subunit of an ATP-permeable channel. In response to pathogen-derived and proinflammatory stimuli, relocates from intracellular compartments to NK-dendritic cell and NK-macrophage immune synapses where it mediates ATP efflux and NK cell activation involved in antimicrobial and antitumor responses. May assemble to form gap junction channel-like structures with gating and ion conductance likely regulated by membrane lipids and voltage rather than by extracellular calcium levels. This is Calcium homeostasis modulator protein 6 from Homo sapiens (Human).